The chain runs to 169 residues: Actin-related protein 2/3 complex subunit 4 (169 aa).

This sequence belongs to the ARPC4 family. Component of the Arp2/3 complex composed of arpB/Arp2, arpC/Arp3, arcA/p41-arc, arcB/p34-arc, arcC/p21-arc, arcD/p20-arc and arcE/p16-arc. Interacts with carmil (via the region between the LRR domain and COOH-terminal proline-rich domain); carmil is required for Arp2/3-dependent actin nucleation. Arp2/3 complex, MyoB, MyoC, and the alpha and beta subunits of capping protein all form a larger complex with carmil.

The protein resides in the cytoplasm. It is found in the cytoskeleton. Its subcellular location is the cytosol. The protein localises to the cell cortex. It localises to the cell projection. The protein resides in the pseudopodium. Its function is as follows. Functions as a component of the Arp2/3 complex which is involved in regulation of actin polymerization and together with an activating nucleation-promoting factor (NPF) mediates the formation of branched actin networks. Seems to contact the pointed end of the daughter actin filament. The Arp2/3 complex is involved in organizing the actin system in cell motility and chemotaxis, in phagocytosis and macropinocytosis, at late steps of endosome processing, and in mitosis. In concert with a group of other proteins, the Arp2/3 complex plays a general role in the rapid activation and adaptation of the actin system to its multiple functions. The sequence is that of Actin-related protein 2/3 complex subunit 4 (arcD) from Dictyostelium discoideum (Social amoeba).